Consider the following 567-residue polypeptide: Protein NRT1/ PTR FAMILY 4.5 (567 aa).

12 helical membrane passes run 30-50 (GMLAASFVLAVEILENLAFLA), 70-92 (SSSEVTTFMATAFLLALLGGFLA), 99-118 (FVIFLISASIEFLGLILLTI), 147-167 (AFLFVGLYLVSLGIGGIKGSL), 189-209 (FFNYYVFCLSCGALVAVTFVV), 219-239 (WGFGVSTISIFLSILVFLLGS), 326-346 (IVLKMLPIFGCTIMLNCCLAQ), 374-394 (VFPVVFMLILAPTYDHLIIPF), 411-431 (IGVGLVLSIVAMAVAALVELK), 448-468 (LPITFLWIALQYLFLGSADLF), 491-511 (SLSWASLALGYYLSSVMVPIV), and 535-555 (LFYWLMCVLSVVNFLHYLFWA).

It belongs to the major facilitator superfamily. Proton-dependent oligopeptide transporter (POT/PTR) (TC 2.A.17) family. As to expression, expressed in flowers and siliques.

It localises to the membrane. Its function is as follows. Involved in abscisic acid transport. This is Protein NRT1/ PTR FAMILY 4.5 (NPF4.5) from Arabidopsis thaliana (Mouse-ear cress).